The following is a 202-amino-acid chain: MQYSGPMQEEVSERTCLVSDPSLSSVAGAGSGVVQAYVARQLARQVHACVDCGMRGIRRAVRRFAADVIAREAPELTAAKREALLDAWVPSPSSEHVAVGSQPAQACGGAPLPADVQYSMVLHFVWYGLGVLSEQERVQLEQAVPHWPQVYWSCFSPQLKRLIKACLTGLLDVEAFCAAVRTLLGIAGMDTAADASIHPHEK.

This is an uncharacterized protein from Treponema pallidum (strain Nichols).